A 213-amino-acid polypeptide reads, in one-letter code: AN1-type zinc finger protein 5 (213 aa).

Residues 8-42 form an A20-type zinc finger; that stretch reads TPGPMLCSTGCGFYGNPRTNGMCSVCYKEHLQRQQ. The Zn(2+) site is built by Cys-14, Cys-18, Cys-30, and Cys-33. Residues 39–149 are disordered; that stretch reads QRQQNSGRMS…EEKAPELPKP (111 aa). Residues 40 to 75 are compositionally biased toward polar residues; that stretch reads RQQNSGRMSPMGTASGSNSPTSDSASVQRADTSLNN. Residues Ser-48 and Ser-58 each carry the phosphoserine modification. Residues 120-138 are compositionally biased toward low complexity; sequence SEPVVTQPSPSVSQPSTSQ. Positions 139–148 are enriched in basic and acidic residues; it reads SEEKAPELPK. An AN1-type zinc finger spans residues 148-194; the sequence is KPKKNRCFMCRKKVGLTGFDCRCGNLFCGLHRYSDKHNCPYDYKAEA. 8 residues coordinate Zn(2+): Cys-154, Cys-157, Cys-168, Cys-170, Cys-175, His-178, His-184, and Cys-186. Position 209 is an N6-acetyllysine (Lys-209).

In terms of assembly, interacts with ubiquitin and polyubiquitinated proteins. Identified in a heterotrimeric complex with ubiquitin and SQSTM1, where ZFAND5 and SQSTM1 both interact with the same ubiquitin molecule. Homooligomer and/or heterooligomer. Interacts (via A20-type domain) with IKBKG and RIPK1 and with TRAF6 (via AN1-type domain). As to expression, highly expressed in skeletal muscle. Expressed in fetal cochlea. Also expressed in infant brain, fetal heart, pancreatic islet, melanocyte, pineal gland, placenta, corneal stroma, and parathyroid tumor. Weakly expressed or undetectable in adult brain, heart, colon, thymus, spleen, kidney, liver, small intestine, placenta, lung and peripheral blood leukocytes. Expressed in rhabdomyosarcoma RD cells (at protein level).

It is found in the cytoplasm. Involved in protein degradation via the ubiquitin-proteasome system. May act by anchoring ubiquitinated proteins to the proteasome. Plays a role in ubiquitin-mediated protein degradation during muscle atrophy. Plays a role in the regulation of NF-kappa-B activation and apoptosis. Inhibits NF-kappa-B activation triggered by overexpression of RIPK1 and TRAF6 but not of RELA. Also inhibits tumor necrosis factor (TNF), IL-1 and TLR4-induced NF-kappa-B activation in a dose-dependent manner. Overexpression sensitizes cells to TNF-induced apoptosis. Is a potent inhibitory factor for osteoclast differentiation. This Homo sapiens (Human) protein is AN1-type zinc finger protein 5 (ZFAND5).